The chain runs to 267 residues: Type II pantothenate kinase (267 aa).

Residue 6-13 (DAGGTLIK) participates in ATP binding. Glu-70 functions as the Proton acceptor in the catalytic mechanism. ATP contacts are provided by residues Thr-99, 121-125 (GGMIQ), Tyr-137, and Ser-225.

Belongs to the type II pantothenate kinase family. Homodimer.

Its subcellular location is the cytoplasm. It catalyses the reaction (R)-pantothenate + ATP = (R)-4'-phosphopantothenate + ADP + H(+). It functions in the pathway cofactor biosynthesis; coenzyme A biosynthesis; CoA from (R)-pantothenate: step 1/5. Catalyzes the phosphorylation of pantothenate (Pan), the first step in CoA biosynthesis. In Staphylococcus aureus (strain USA300), this protein is Type II pantothenate kinase.